Consider the following 552-residue polypeptide: Dihydroxy-acid dehydratase (552 aa).

Asp-78 contributes to the Mg(2+) binding site. Cys-119 is a [2Fe-2S] cluster binding site. Residues Asp-120 and Lys-121 each coordinate Mg(2+). An N6-carboxylysine modification is found at Lys-121. Cys-191 serves as a coordination point for [2Fe-2S] cluster. Mg(2+) is bound at residue Glu-442. Residue Ser-468 is the Proton acceptor of the active site.

The protein belongs to the IlvD/Edd family. As to quaternary structure, homodimer. [2Fe-2S] cluster is required as a cofactor. Mg(2+) serves as cofactor.

The catalysed reaction is (2R)-2,3-dihydroxy-3-methylbutanoate = 3-methyl-2-oxobutanoate + H2O. It catalyses the reaction (2R,3R)-2,3-dihydroxy-3-methylpentanoate = (S)-3-methyl-2-oxopentanoate + H2O. The protein operates within amino-acid biosynthesis; L-isoleucine biosynthesis; L-isoleucine from 2-oxobutanoate: step 3/4. It participates in amino-acid biosynthesis; L-valine biosynthesis; L-valine from pyruvate: step 3/4. In terms of biological role, functions in the biosynthesis of branched-chain amino acids. Catalyzes the dehydration of (2R,3R)-2,3-dihydroxy-3-methylpentanoate (2,3-dihydroxy-3-methylvalerate) into 2-oxo-3-methylpentanoate (2-oxo-3-methylvalerate) and of (2R)-2,3-dihydroxy-3-methylbutanoate (2,3-dihydroxyisovalerate) into 2-oxo-3-methylbutanoate (2-oxoisovalerate), the penultimate precursor to L-isoleucine and L-valine, respectively. This Ruminiclostridium cellulolyticum (strain ATCC 35319 / DSM 5812 / JCM 6584 / H10) (Clostridium cellulolyticum) protein is Dihydroxy-acid dehydratase.